Reading from the N-terminus, the 508-residue chain is Maturase K (508 aa).

The protein belongs to the intron maturase 2 family. MatK subfamily.

The protein localises to the plastid. The protein resides in the chloroplast. Usually encoded in the trnK tRNA gene intron. Probably assists in splicing its own and other chloroplast group II introns. This is Maturase K from Marathrum schiedeanum.